A 706-amino-acid polypeptide reads, in one-letter code: Elongation factor G (706 aa).

The region spanning 8–295 (ERYRNFGIMA…AVIDYLPSPL (288 aa)) is the tr-type G domain. GTP-binding positions include 17–24 (AHIDAGKT), 92–96 (DTPGH), and 146–149 (NKMD).

Belongs to the TRAFAC class translation factor GTPase superfamily. Classic translation factor GTPase family. EF-G/EF-2 subfamily.

The protein localises to the cytoplasm. Functionally, catalyzes the GTP-dependent ribosomal translocation step during translation elongation. During this step, the ribosome changes from the pre-translocational (PRE) to the post-translocational (POST) state as the newly formed A-site-bound peptidyl-tRNA and P-site-bound deacylated tRNA move to the P and E sites, respectively. Catalyzes the coordinated movement of the two tRNA molecules, the mRNA and conformational changes in the ribosome. The chain is Elongation factor G from Jannaschia sp. (strain CCS1).